Here is a 570-residue protein sequence, read N- to C-terminus: Methionine--tRNA ligase (570 aa).

Positions 11–21 match the 'HIGH' region motif; the sequence is PYVQTVPHLGN. Zn(2+)-binding residues include C143, C146, C156, and C159. The 'KMSKS' region motif lies at 333-337; that stretch reads KFSKS. K336 lines the ATP pocket.

This sequence belongs to the class-I aminoacyl-tRNA synthetase family. MetG type 1 subfamily. Zn(2+) is required as a cofactor.

It is found in the cytoplasm. It catalyses the reaction tRNA(Met) + L-methionine + ATP = L-methionyl-tRNA(Met) + AMP + diphosphate. Is required not only for elongation of protein synthesis but also for the initiation of all mRNA translation through initiator tRNA(fMet) aminoacylation. This chain is Methionine--tRNA ligase, found in Pyrobaculum arsenaticum (strain DSM 13514 / JCM 11321 / PZ6).